Here is a 285-residue protein sequence, read N- to C-terminus: Bifunctional protein FolD (285 aa).

NADP(+) contacts are provided by residues 165-167 (GRS) and serine 190.

It belongs to the tetrahydrofolate dehydrogenase/cyclohydrolase family. In terms of assembly, homodimer.

It carries out the reaction (6R)-5,10-methylene-5,6,7,8-tetrahydrofolate + NADP(+) = (6R)-5,10-methenyltetrahydrofolate + NADPH. The catalysed reaction is (6R)-5,10-methenyltetrahydrofolate + H2O = (6R)-10-formyltetrahydrofolate + H(+). Its pathway is one-carbon metabolism; tetrahydrofolate interconversion. In terms of biological role, catalyzes the oxidation of 5,10-methylenetetrahydrofolate to 5,10-methenyltetrahydrofolate and then the hydrolysis of 5,10-methenyltetrahydrofolate to 10-formyltetrahydrofolate. This chain is Bifunctional protein FolD, found in Burkholderia thailandensis (strain ATCC 700388 / DSM 13276 / CCUG 48851 / CIP 106301 / E264).